Reading from the N-terminus, the 620-residue chain is Leucine-rich repeat and immunoglobulin-like domain-containing nogo receptor-interacting protein 1 (620 aa).

An N-terminal signal peptide occupies residues 1–41 (MQVSKRMLAGGVRSMPSPLLACWQPILLLVLGSVLSGSATG). Disulfide bonds link C42/C48 and C46/C57. Residues 42 to 71 (CPPRCECSAQDRAVLCHRKRFVAVPEGIPT) form the LRRNT domain. Residues 42–561 (CPPRCECSAQ…FDIKTLIIAT (520 aa)) lie on the Extracellular side of the membrane. 11 LRR repeats span residues 72–93 (ETRL…EFAS), 96–117 (HLEE…AFNN), 120–141 (NLRT…VFTG), 144–165 (NLTK…MFQD), 168–189 (NLKS…AFSG), 192–213 (SLEQ…ALSH), 216–237 (GLIV…SFKR), 264–285 (NLTS…AVRH), 288–309 (YLRF…MLHE), 312–333 (RLQE…AFRG), and 336–357 (YLRV…VFHS). N-linked (GlcNAc...) asparagine glycosylation occurs at N144. The N-linked (GlcNAc...) asparagine glycan is linked to N202. Residues N264, N274, and N293 are each glycosylated (N-linked (GlcNAc...) asparagine). N341 carries an N-linked (GlcNAc...) asparagine glycan. Residues 369 to 423 (NPLACDCRLLWVFRRRWRLNFNRQQPTCATPEFVQGKEFKDFPDVLLPNYFTCRR) form the LRRCT domain. 3 cysteine pairs are disulfide-bonded: C373–C396, C375–C421, and C446–C497. The 103-residue stretch at 411–513 (PDVLLPNYFT…GNDSMPAHLH (103 aa)) folds into the Ig-like C2-type domain. Residues N492, N505, N526, and N542 are each glycosylated (N-linked (GlcNAc...) asparagine). The helical transmembrane segment at 562–582 (TMGFISFLGVVLFCLVLLFLW) threads the bilayer. At 583–620 (SRGKGNTKHNIEIEYVPRKSDAGISSADAPRKFNMKMI) the chain is on the cytoplasmic side. S602 bears the Phosphoserine mark.

In terms of assembly, homotetramer. Forms a ternary complex with RTN4R/NGFR and RTN4R/TNFRSF19. Interacts with NGRF and MYT1L. Interacts with RTN4R. Post-translationally, N-glycosylated. Contains predominantly high-mannose glycans. In terms of tissue distribution, expressed exclusively in the central nervous system. Highest level in the in amygdala, hippocampus, thalamus and cerebral cortex. In the rest of the brain a basal expression seems to be always present. Up-regulated in substantia nigra neurons from Parkinson disease patients.

The protein resides in the cell membrane. Its function is as follows. Functional component of the Nogo receptor signaling complex (RTN4R/NGFR) in RhoA activation responsible for some inhibition of axonal regeneration by myelin-associated factors. Is also an important negative regulator of oligodentrocyte differentiation and axonal myelination. Acts in conjunction with RTN4 and RTN4R in regulating neuronal precursor cell motility during cortical development. In Homo sapiens (Human), this protein is Leucine-rich repeat and immunoglobulin-like domain-containing nogo receptor-interacting protein 1 (LINGO1).